We begin with the raw amino-acid sequence, 2311 residues long: Proto-oncogene tyrosine-protein kinase ROS (2311 aa).

The signal sequence occupies residues Met-1–Cys-24. Topologically, residues Ser-25–Asp-1873 are extracellular. Asn-49, Asn-65, Asn-77, Asn-123, Asn-132, Asn-265, Asn-287, Asn-307, Asn-333, Asn-377, Asn-405, Asn-480, Asn-607, Asn-628, Asn-706, Asn-714, Asn-911, Asn-940, Asn-962, Asn-971, Asn-1110, Asn-1154, Asn-1180, Asn-1233, Asn-1255, Asn-1282, Asn-1316, Asn-1470, Asn-1509, Asn-1588, Asn-1628, Asn-1682, Asn-1696, and Asn-1730 each carry an N-linked (GlcNAc...) asparagine glycan. Fibronectin type-III domains follow at residues Lys-110–Val-202 and Pro-203–Lys-294. The Fibronectin type-III 3 domain occupies Leu-571–Glu-671. Fibronectin type-III domains are found at residues Val-952–Gly-1047 and Ala-1051–Ile-1158. 4 consecutive Fibronectin type-III domains span residues Asp-1459–Gly-1569, Val-1570–Phe-1669, Thr-1671–Gly-1766, and Val-1767–Thr-1868. The segment covering Ser-1754 to Thr-1764 has biased composition (low complexity). The disordered stretch occupies residues Ser-1754–Trp-1786. Positions Lys-1775 to Trp-1786 are enriched in basic and acidic residues. N-linked (GlcNAc...) asparagine glycans are attached at residues Asn-1792, Asn-1795, and Asn-1822. A helical membrane pass occupies residues Ile-1874–Trp-1898. The Cytoplasmic portion of the chain corresponds to His-1899–Val-2311. A Protein kinase domain is found at Leu-1961 to Leu-2240. ATP contacts are provided by residues Leu-1967–Val-1975 and Lys-1996. The active-site Proton acceptor is Asp-2095. At Tyr-2131 the chain carries Phosphotyrosine; by autocatalysis.

It belongs to the protein kinase superfamily. Tyr protein kinase family. Insulin receptor subfamily. Interacts with VAV3; constitutive interaction mediating VAV3 phosphorylation. In terms of tissue distribution, highest expression in kidney. Also expressed in gonad, thymus, bursa, brain and kidney.

Its subcellular location is the cell membrane. The enzyme catalyses L-tyrosyl-[protein] + ATP = O-phospho-L-tyrosyl-[protein] + ADP + H(+). Functionally, orphan receptor tyrosine kinase (RTK) that may activate several downstream signaling pathways related to cell differentiation, proliferation, growth and survival including the PI3 kinase-mTOR signaling pathway. Mediates the phosphorylation of PTPN11, an activator of this pathway. May also phosphorylate and activate the transcription factor STAT3 to control anchorage-independent cell growth. Mediates the phosphorylation and the activation of VAV3, a guanine nucleotide exchange factor regulating cell morphology. May activate other downstream signaling proteins including AKT1, MAPK1, MAPK3, IRS1, and PLCG2. The polypeptide is Proto-oncogene tyrosine-protein kinase ROS (ROS1) (Gallus gallus (Chicken)).